A 78-amino-acid chain; its full sequence is Consomatin Te1 (78 aa).

The signal sequence occupies residues 1–22; it reads MQTAYWMMVMMMVWITAPLSEG. Residues 23-56 constitute a propeptide that is removed on maturation; it reads GQLNDVIRGLVPDNLAPQLVLQSLDSRRHPHGIR. The cysteines at positions 63 and 68 are disulfide-linked. Position 65 is a D-tryptophan (tryptophan 65). 3 positions are modified to 4-hydroxyproline: proline 69, proline 70, and proline 72. A propeptide spanning residues 74–78 is cleaved from the precursor; the sequence is RRLGS.

The protein belongs to the conotoxin C superfamily. Consomatin family. As to expression, expressed by the venom duct.

The protein localises to the secreted. Moderately activates human somatostatin receptors (SSTR) with a preferential activation of SSTR1 and SSTR4. In vivo, does not cause behavioral changes in mice within a few minutes of intracranial injection, but causes a progressive loss of movement thereafter. Four to five hours after injection, mice recover, even with the highest dose tested. Shows antinociception and antihyperalgesia activities in two mouse models of acute pain, most probably by acting outside the central nervous system. This is Consomatin Te1 from Conus terebra (Sea snail).